The sequence spans 1292 residues: ABC multidrug transporter MDR5 (1292 aa).

The interval 1–43 (MTEEPKPVTPVLRDGEAGLDTTAPTEAGSLGEEAPKKEADGIV) is disordered. 2 helical membrane passes run 79–99 (ICGF…TIIF) and 128–148 (LWFV…TICF). One can recognise an ABC transmembrane type-1 1 domain in the interval 81–370 (GFFAAVASGT…IAPTLGEFTK (290 aa)). N-linked (GlcNAc...) asparagine glycosylation is present at Asn-149. The next 4 helical transmembrane spans lie at 202–222 (VGTC…AFTQ), 226–246 (LTLP…ITVA), 314–334 (EFFI…KLLL), and 344–364 (ILTV…IAPT). The 246-residue stretch at 405 to 650 (LELSNAVFSY…KGQYWSLVNA (246 aa)) folds into the ABC transporter 1 domain. 440–447 (GASGSGKS) serves as a coordination point for ATP. A glycan (N-linked (GlcNAc...) asparagine) is linked at Asn-494. The segment at 656-691 (ASDDSSSDTDKETDTQPAEILEKHATTKSTHSKVPH) is disordered. Basic and acidic residues predominate over residues 663–680 (DTDKETDTQPAEILEKHA). 2 helical membrane passes run 720 to 740 (HWLF…AFPA) and 768 to 788 (LMFF…GFFL). Residues 725–1012 (LLGGIASVVS…IFGFTMNTTK (288 aa)) form the ABC transmembrane type-1 2 domain. N-linked (GlcNAc...) asparagine glycosylation occurs at Asn-820. 4 helical membrane-spanning segments follow: residues 844 to 864 (IGLI…ALVT), 866 to 886 (WKLA…AGFI), 949 to 969 (IAMI…ALAF), and 986 to 1006 (FFVI…IFGF). Asn-1009, Asn-1031, and Asn-1052 each carry an N-linked (GlcNAc...) asparagine glycan. One can recognise an ABC transporter 2 domain in the interval 1048–1285 (VEFRNVSFSY…KGRYFEMCKA (238 aa)). 1083–1090 (GPSGCGKT) is an ATP binding site.

The protein belongs to the ABC transporter superfamily. ABCB family. Multidrug resistance exporter (TC 3.A.1.201) subfamily.

It is found in the cell membrane. It catalyses the reaction itraconazole(in) + ATP + H2O = itraconazole(out) + ADP + phosphate + H(+). In terms of biological role, pleiotropic ABC efflux transporter involved in the modulation susceptibility to itraconazole. The protein is ABC multidrug transporter MDR5 of Trichophyton rubrum (strain ATCC MYA-4607 / CBS 118892) (Athlete's foot fungus).